Here is a 435-residue protein sequence, read N- to C-terminus: Ribulose bisphosphate carboxylase large chain (435 aa).

Asn104 and Thr154 together coordinate substrate. Lys156 serves as the catalytic Proton acceptor. Lys158 provides a ligand contact to substrate. Lys182, Asp184, and Glu185 together coordinate Mg(2+). Residue Lys182 is modified to N6-carboxylysine. His275 acts as the Proton acceptor in catalysis. Residues Arg276, His308, and Ser360 each coordinate substrate.

Belongs to the RuBisCO large chain family. Type I subfamily. In terms of assembly, heterohexadecamer of 8 large chains and 8 small chains. It depends on Mg(2+) as a cofactor.

The protein resides in the plastid. It is found in the chloroplast. It catalyses the reaction 2 (2R)-3-phosphoglycerate + 2 H(+) = D-ribulose 1,5-bisphosphate + CO2 + H2O. The catalysed reaction is D-ribulose 1,5-bisphosphate + O2 = 2-phosphoglycolate + (2R)-3-phosphoglycerate + 2 H(+). Its function is as follows. RuBisCO catalyzes two reactions: the carboxylation of D-ribulose 1,5-bisphosphate, the primary event in carbon dioxide fixation, as well as the oxidative fragmentation of the pentose substrate in the photorespiration process. Both reactions occur simultaneously and in competition at the same active site. The polypeptide is Ribulose bisphosphate carboxylase large chain (Euglena pisciformis).